The sequence spans 159 residues: 17 kDa surface antigen (159 aa).

An N-terminal signal peptide occupies residues 1–19 (MKIISKIIVILLAASMLQA). Cysteine 20 is lipidated: N-palmitoyl cysteine. Cysteine 20 carries S-diacylglycerol cysteine lipidation.

It belongs to the rickettsiale 17 kDa surface antigen family.

It is found in the cell outer membrane. This chain is 17 kDa surface antigen (omp), found in Rickettsia bellii.